The primary structure comprises 315 residues: Acetyl-coenzyme A carboxylase carboxyl transferase subunit alpha (315 aa).

Positions 35–289 constitute a CoA carboxyltransferase C-terminal domain; sequence KLSKKRFELM…RKAVAAELKI (255 aa).

Belongs to the AccA family. In terms of assembly, acetyl-CoA carboxylase is a heterohexamer composed of biotin carboxyl carrier protein (AccB), biotin carboxylase (AccC) and two subunits each of ACCase subunit alpha (AccA) and ACCase subunit beta (AccD).

It is found in the cytoplasm. It carries out the reaction N(6)-carboxybiotinyl-L-lysyl-[protein] + acetyl-CoA = N(6)-biotinyl-L-lysyl-[protein] + malonyl-CoA. It participates in lipid metabolism; malonyl-CoA biosynthesis; malonyl-CoA from acetyl-CoA: step 1/1. Component of the acetyl coenzyme A carboxylase (ACC) complex. First, biotin carboxylase catalyzes the carboxylation of biotin on its carrier protein (BCCP) and then the CO(2) group is transferred by the carboxyltransferase to acetyl-CoA to form malonyl-CoA. The polypeptide is Acetyl-coenzyme A carboxylase carboxyl transferase subunit alpha (Francisella tularensis subsp. mediasiatica (strain FSC147)).